The primary structure comprises 120 residues: Ribosome-binding factor A (120 aa).

It belongs to the RbfA family. In terms of assembly, monomer. Binds 30S ribosomal subunits, but not 50S ribosomal subunits or 70S ribosomes.

Its subcellular location is the cytoplasm. Its function is as follows. One of several proteins that assist in the late maturation steps of the functional core of the 30S ribosomal subunit. Associates with free 30S ribosomal subunits (but not with 30S subunits that are part of 70S ribosomes or polysomes). Required for efficient processing of 16S rRNA. May interact with the 5'-terminal helix region of 16S rRNA. The sequence is that of Ribosome-binding factor A from Rickettsia peacockii (strain Rustic).